The sequence spans 345 residues: MSKDIKLTSLTKNSGCAAKIGPGVLHSVLSSLPKFEDENLIVGFDTSDDACVYKINDDTVVIKTVDFFPPMVDDPYTFGQVAAANALSDVYAMGGNPSIAMNLICFPSCLDISIMREILAGGYDKVKEAGAVIAGGHTIADPTPKYGLCVSGFARPEEILSNSNAKTGDVIILTKPLGIGIMNTAAKAELIDENKIKEVTSIMSTLNKYAKECTLGLEIHSCTDVTGFGLIGHSYEMASGSKKTIEIFSESIPIIDGALDYAKMGIIPEGMYNNLDYLKDKFAVGANISQELQDVLIDPQTSGGLLLSLPEKQAKEFLSRIENFTPYARIIGQVLDKGDKPIVIK.

Cysteine 16 is an active-site residue. ATP-binding positions include lysine 19 and 46–48 (TSD). Aspartate 49 contributes to the Mg(2+) binding site. Residues aspartate 66, aspartate 89, and 136–138 (GHT) contribute to the ATP site. Mg(2+) is bound at residue aspartate 89. A Mg(2+)-binding site is contributed by aspartate 224.

Belongs to the selenophosphate synthase 1 family. Class I subfamily. In terms of assembly, homodimer. It depends on Mg(2+) as a cofactor.

The enzyme catalyses hydrogenselenide + ATP + H2O = selenophosphate + AMP + phosphate + 2 H(+). In terms of biological role, synthesizes selenophosphate from selenide and ATP. The chain is Selenide, water dikinase from Clostridium botulinum (strain Eklund 17B / Type B).